Reading from the N-terminus, the 944-residue chain is Ras guanine nucleotide exchange factor O (944 aa).

Residues 16–54 (CGICQNLFKDPNTLIPCGHAFCLDCLTTNASIKNCIQCK) form an RING-type zinc finger. The tract at residues 80 to 102 (NNSNNNSNGENTNNNNNIINNER) is disordered. Residues 152 to 192 (NNIRYCMEHYEHYYAFCNDCQAPVCPSCLLTTHNRHGMIPL) form a B box-type zinc finger. Zn(2+) contacts are provided by C157, H160, C179, and H184. Coiled-coil stretches lie at residues 200–234 (KMKE…LLDS) and 271–303 (ASHM…KFKD). The region spanning 402 to 528 (EEFEVKYGSL…LLLNSNENSP (127 aa)) is the N-terminal Ras-GEF domain. Disordered stretches follow at residues 530 to 562 (ITSS…LQPT), 587 to 623 (TNNG…SSPS), and 644 to 670 (ESPL…FGAS). The segment covering 590–604 (GTCKIQNSPPKNYQQ) has biased composition (polar residues). Composition is skewed to low complexity over residues 605-623 (SNYS…SSPS) and 648-670 (NSPR…FGAS). Residues 727-944 (DEFEIAKQLT…EYLNVHIDEL (218 aa)) form the Ras-GEF domain.

Promotes the exchange of Ras-bound GDP by GTP. The sequence is that of Ras guanine nucleotide exchange factor O (gefO) from Dictyostelium discoideum (Social amoeba).